The primary structure comprises 170 residues: 4-hydroxyphenylacetate 3-monooxygenase reductase component (170 aa).

This sequence belongs to the non-flavoprotein flavin reductase family. HpaC subfamily. In terms of assembly, monomer. HPA 3-hydroxylase consists of a reductase component HpaC and an oxygenase component HpaB. Some form of interactions between the reductase and the oxygenase facilitate the transfer of FADH(-) to the oxygenase in P.aeruginosa, although interactions are not required in other species.

It catalyses the reaction FADH2 + NAD(+) = FAD + NADH + 2 H(+). Its pathway is aromatic compound metabolism; 4-hydroxyphenylacetate degradation; pyruvate and succinate semialdehyde from 4-hydroxyphenylacetate: step 1/7. With respect to regulation, the rate of FAD reduction is independent of the presence of HPA, demonstrating that, in contrast to HPAH from A.baumannii, the activity of the HPAH reductase is not allosterically regulated by the substrate. Functionally, reductase component of the 4-hydroxyphenylacetate (HPA) 3-hydroxylase. Catalyzes the reduction of FAD by NADH. The reduced flavin is then transferred to the oxygenase component HpaB. Is also able to reduce FMN and riboflavin, but preferentially binds FAD. Has no activity with NADPH as the reductant. This is 4-hydroxyphenylacetate 3-monooxygenase reductase component from Pseudomonas aeruginosa (strain ATCC 15692 / DSM 22644 / CIP 104116 / JCM 14847 / LMG 12228 / 1C / PRS 101 / PAO1).